The primary structure comprises 551 residues: Putative transport protein CGSHiGG_02670 (551 aa).

Transmembrane regions (helical) follow at residues 4 to 24 (IAITISLLALVAVIGLWIGHW), 28 to 48 (GVGLGIGGVLFGGIIVAHFTN), 65 to 85 (FGLILFVYTIGIQVGPGFFSS), 95 to 115 (AFAILIIVLGSIAVVLVHKIA), and 157 to 177 (VSYAMAYPFGICGILLAMWLI). 2 RCK C-terminal domains span residues 191-275 (RFNA…IIGH) and 277-360 (VDAP…VIGN). 6 helical membrane-spanning segments follow: residues 370–390 (MLPVFIGIGLGVLVGSIPFYI), 402–424 (AGGPLVVALILARIGTIGKLYWF), 438–458 (IVLFLAVVGLKSGGSFFDTLV), 463–483 (LEWMGYGIFITFVPLIIVGTI), 492–512 (YLTICGLLAGSMTDPPALAFA), and 529–549 (VYPLVMFLRIMSPQLLAVLLW).

Belongs to the AAE transporter (TC 2.A.81) family. YidE subfamily.

It is found in the cell membrane. In Haemophilus influenzae (strain PittGG), this protein is Putative transport protein CGSHiGG_02670.